A 124-amino-acid chain; its full sequence is Snake venom vascular endothelial growth factor toxin apiscin (124 aa).

The first 24 residues, 1 to 24 (MAAYLLAVAILFCIQGWPSGTVQG), serve as a signal peptide directing secretion. The residue at position 25 (Gln25) is a Pyrrolidone carboxylic acid. 3 disulfides stabilise this stretch: Cys38–Cys80, Cys69–Cys115, and Cys73–Cys117.

The protein belongs to the PDGF/VEGF growth factor family. Snake venom VEGF subfamily. In terms of assembly, homodimer; disulfide-linked. Interacts with VEGF receptor-1 (FLT1) with a high affinity, whereas it binds to VEGF receptor-2 (KDR) with a low affinity. Does not bind VEGF receptor-3 (FLT4). Expressed by the venom gland.

Its subcellular location is the secreted. Functionally, snake venom VEGFs that may contribute to venom dispersion and prey subjugation by inducing vascular permeability and hypotension. This protein induces an increase in capillary permeability after intradermal injection, as well as a drastic hypotensive effect after intravenous injection. The hypotension is mediated by nitric oxide (NO), which is produced by VEGF-activated endothelium NO synthase. Also induces angiogenesis in vitro. Like other crotalid VEGFs, this protein interacts with VEGF receptor-1 (FLT1) with a high affinity, whereas it binds to VEGF receptor-2 (KDR) with a low affinity. In Agkistrodon piscivorus piscivorus (Eastern cottonmouth), this protein is Snake venom vascular endothelial growth factor toxin apiscin.